The primary structure comprises 235 residues: NifU-like protein 2, chloroplastic (235 aa).

The transit peptide at 1 to 16 (MQLLTLNPAAISRTPP) directs the protein to the chloroplast.

It belongs to the NifU family. Homodimer; disulfide-linked. The cofactor is [2Fe-2S] cluster. Predominantly expressed in leaves and floral stalks. Ubiquitous (at protein level).

Its subcellular location is the plastid. The protein resides in the chloroplast stroma. Molecular scaffold for [Fe-S] cluster assembly of chloroplastic iron-sulfur proteins. Required for biogenesis of ferredoxin, a major photosynthetic electron carrier containing [2Fe-2S] cluster. Required for the assembly of photosystem I complex. The chain is NifU-like protein 2, chloroplastic (NIFU2) from Arabidopsis thaliana (Mouse-ear cress).